The chain runs to 156 residues: Small ribosomal subunit protein uS7 (156 aa).

It belongs to the universal ribosomal protein uS7 family. As to quaternary structure, part of the 30S ribosomal subunit. Contacts proteins S9 and S11.

Functionally, one of the primary rRNA binding proteins, it binds directly to 16S rRNA where it nucleates assembly of the head domain of the 30S subunit. Is located at the subunit interface close to the decoding center, probably blocks exit of the E-site tRNA. This Dictyoglomus thermophilum (strain ATCC 35947 / DSM 3960 / H-6-12) protein is Small ribosomal subunit protein uS7.